A 199-amino-acid chain; its full sequence is Phosphoheptose isomerase (199 aa).

Residues 36 to 198 enclose the SIS domain; sequence MAQCLLNEHK…DRKLIPSSED (163 aa). Position 51-53 (51-53) interacts with substrate; that stretch reads NGG. Zn(2+)-binding residues include histidine 60 and glutamate 64. Substrate contacts are provided by residues glutamate 64, 93 to 94, 119 to 121, serine 124, and glutamine 174; these read ND and STS. Zn(2+)-binding residues include glutamine 174 and histidine 182.

The protein belongs to the SIS family. GmhA subfamily. In terms of assembly, homotetramer. Requires Zn(2+) as cofactor.

It localises to the cytoplasm. It carries out the reaction 2 D-sedoheptulose 7-phosphate = D-glycero-alpha-D-manno-heptose 7-phosphate + D-glycero-beta-D-manno-heptose 7-phosphate. It participates in carbohydrate biosynthesis; D-glycero-D-manno-heptose 7-phosphate biosynthesis; D-glycero-alpha-D-manno-heptose 7-phosphate and D-glycero-beta-D-manno-heptose 7-phosphate from sedoheptulose 7-phosphate: step 1/1. In terms of biological role, catalyzes the isomerization of sedoheptulose 7-phosphate in D-glycero-D-manno-heptose 7-phosphate. The protein is Phosphoheptose isomerase of Coxiella burnetii (strain CbuK_Q154) (Coxiella burnetii (strain Q154)).